The chain runs to 414 residues: Secernin-1 (414 aa).

Alanine 2 is modified (N-acetylalanine). Residue cysteine 9 is part of the active site.

It belongs to the peptidase C69 family. Secernin subfamily.

It localises to the cytoplasm. Regulates exocytosis in mast cells. Increases both the extent of secretion and the sensitivity of mast cells to stimulation with calcium. The sequence is that of Secernin-1 (SCRN1) from Bos taurus (Bovine).